Here is a 198-residue protein sequence, read N- to C-terminus: Recombination protein RecR (198 aa).

The segment at cysteine 57–cysteine 72 adopts a C4-type zinc-finger fold. A Toprim domain is found at glutamate 80–alanine 175.

The protein belongs to the RecR family.

Its function is as follows. May play a role in DNA repair. It seems to be involved in an RecBC-independent recombinational process of DNA repair. It may act with RecF and RecO. In Streptococcus equi subsp. zooepidemicus (strain MGCS10565), this protein is Recombination protein RecR.